A 290-amino-acid polypeptide reads, in one-letter code: Arginine N-acetyltransferase avaD (290 aa).

157-163 (NQAHFEA) contributes to the acetyl-CoA binding site.

The protein belongs to the acetyltransferase family. GCN5 subfamily.

It functions in the pathway secondary metabolite metabolism. In terms of biological role, arginine N-acetyltransferase; part of the cluster that mediates the biosynthesis of a highly modified cyclo-arginine-tryptophan dipeptide (cRW). Within the pathway, avaD catalyzes the N-acetylation of the guanidine group. The first step of the pathway is perfornmed by the arginine-containing cyclodipeptide synthase (RCPDS) avaA that acts as the scaffold-generating enzyme and is responsible for formation of the cyclo-Arg-Trp (cRW) diketopiperazine. AvaB then acts as a multifunctional flavoenzyme that is responsible for generating the cyclo-Arg-formylkynurenine DKP, which can be deformylated by avaC. AvaB then further catalyzes an additional N-oxidation followed by cyclization and dehydration. The next step is an N-acetylation of the guanidine group catalyzed by the arginine N-acetyltransferase avaD. The roles of the additional enzymes identified within the ava cluster still have to be determined. This chain is Arginine N-acetyltransferase avaD, found in Aspergillus versicolor.